Consider the following 236-residue polypeptide: Purine nucleoside phosphorylase DeoD-type (236 aa).

H5 contacts a purine D-ribonucleoside. Residues G21, R25, R44, and 88–91 (RVGS) each bind phosphate. Residues 180-182 (DME) and 204-205 (SD) each bind a purine D-ribonucleoside. The Proton donor role is filled by D205.

The protein belongs to the PNP/UDP phosphorylase family. Homohexamer; trimer of homodimers.

The catalysed reaction is a purine D-ribonucleoside + phosphate = a purine nucleobase + alpha-D-ribose 1-phosphate. It catalyses the reaction a purine 2'-deoxy-D-ribonucleoside + phosphate = a purine nucleobase + 2-deoxy-alpha-D-ribose 1-phosphate. Catalyzes the reversible phosphorolytic breakdown of the N-glycosidic bond in the beta-(deoxy)ribonucleoside molecules, with the formation of the corresponding free purine bases and pentose-1-phosphate. This chain is Purine nucleoside phosphorylase DeoD-type, found in Aliivibrio salmonicida (strain LFI1238) (Vibrio salmonicida (strain LFI1238)).